A 389-amino-acid polypeptide reads, in one-letter code: Phospho-N-acetylmuramoyl-pentapeptide-transferase (389 aa).

The next 10 helical transmembrane spans lie at 25 to 45 (RAVM…PWVI), 73 to 93 (TMGG…WGDL), 97 to 117 (FIWI…VDDY), 135 to 155 (FWQS…VSEA), 190 to 210 (ISYP…IVGA), 222 to 242 (GLVI…AYVM), 258 to 278 (GAGE…AFLW), 286 to 306 (VFMG…VAVI), 311 to 331 (IVLF…MLQV), and 366 to 386 (QVVV…LTTL).

The protein belongs to the glycosyltransferase 4 family. MraY subfamily. Mg(2+) is required as a cofactor.

Its subcellular location is the cell inner membrane. It catalyses the reaction UDP-N-acetyl-alpha-D-muramoyl-L-alanyl-gamma-D-glutamyl-meso-2,6-diaminopimeloyl-D-alanyl-D-alanine + di-trans,octa-cis-undecaprenyl phosphate = di-trans,octa-cis-undecaprenyl diphospho-N-acetyl-alpha-D-muramoyl-L-alanyl-D-glutamyl-meso-2,6-diaminopimeloyl-D-alanyl-D-alanine + UMP. Its pathway is cell wall biogenesis; peptidoglycan biosynthesis. Catalyzes the initial step of the lipid cycle reactions in the biosynthesis of the cell wall peptidoglycan: transfers peptidoglycan precursor phospho-MurNAc-pentapeptide from UDP-MurNAc-pentapeptide onto the lipid carrier undecaprenyl phosphate, yielding undecaprenyl-pyrophosphoryl-MurNAc-pentapeptide, known as lipid I. In Burkholderia cenocepacia (strain HI2424), this protein is Phospho-N-acetylmuramoyl-pentapeptide-transferase.